The following is a 421-amino-acid chain: Zinc chaperone AztD (421 aa).

The N-terminal stretch at 1–29 (MMENIMKKRLLSTSISTLLLGLSVMPAFA) is a signal peptide. Zn(2+) is bound by residues His-101, His-104, Asp-106, His-126, His-169, His-216, and His-405. A disulfide bridge links Cys-212 with Cys-229. The interval 399-421 (GGSGKVHGEHHDHEAHHHDDHAH) is disordered. Over residues 404-421 (VHGEHHDHEAHHHDDHAH) the composition is skewed to basic and acidic residues. An N-terminal Zn(2+)-binding motif; binds a third Zn(2+) with low affinity motif is present at residues 408 to 419 (HHDHEAHHHDDH).

As to quaternary structure, monomer.

Its subcellular location is the periplasm. Functionally, acts as a zinc chaperone in the AztABCD zinc transport system. Directly transfers one zinc cation to the solute binding protein AztC; the transfer occurs without the formation of a stable interaction. Binds 3 Zn(2+), two with high affinity and one with low affinity, and transfers only Zn(2+) bound to site 2 to AztC. The protein is Zinc chaperone AztD of Citrobacter koseri (strain ATCC BAA-895 / CDC 4225-83 / SGSC4696).